We begin with the raw amino-acid sequence, 498 residues long: ATP synthase subunit beta, chloroplastic (498 aa).

At T6 the chain carries Phosphothreonine. At S13 the chain carries Phosphoserine. An ATP-binding site is contributed by 172 to 179; it reads GGAGVGKT.

It belongs to the ATPase alpha/beta chains family. F-type ATPases have 2 components, CF(1) - the catalytic core - and CF(0) - the membrane proton channel. CF(1) has five subunits: alpha(3), beta(3), gamma(1), delta(1), epsilon(1). CF(0) has four main subunits: a(1), b(1), b'(1) and c(9-12).

It localises to the plastid. The protein resides in the chloroplast thylakoid membrane. The enzyme catalyses ATP + H2O + 4 H(+)(in) = ADP + phosphate + 5 H(+)(out). Functionally, produces ATP from ADP in the presence of a proton gradient across the membrane. The catalytic sites are hosted primarily by the beta subunits. In Raphanus sativus (Radish), this protein is ATP synthase subunit beta, chloroplastic.